A 432-amino-acid polypeptide reads, in one-letter code: C4-dicarboxylate transport protein (432 aa).

The next 8 membrane-spanning stretches (helical) occupy residues 8-28, 44-64, 78-98, 148-168, 188-208, 222-242, 307-327, and 355-375; these read ILYVQVLFAICVGILLGHYWP, LIKMIIGPIIFCTVVTGIAGM, LLYFEVVSTFALLIGLGAAHL, GDILQILLVSLFFGAALAVLG, IVHVITKVAPIGAFGAMAFTI, LIGTFYFTAIIFVLVVLGTIA, IYMTMAVIFIAQATGIELTLM, and AATLAVVPTIPVAGMVLILGI.

It belongs to the dicarboxylate/amino acid:cation symporter (DAACS) (TC 2.A.23) family.

The protein resides in the cell inner membrane. Responsible for the transport of dicarboxylates such as succinate, fumarate, and malate from the periplasm across the membrane. This chain is C4-dicarboxylate transport protein, found in Cupriavidus necator (strain ATCC 17699 / DSM 428 / KCTC 22496 / NCIMB 10442 / H16 / Stanier 337) (Ralstonia eutropha).